Here is a 348-residue protein sequence, read N- to C-terminus: tRNA N6-adenosine threonylcarbamoyltransferase (348 aa).

Histidine 109 and histidine 113 together coordinate Fe cation. Substrate contacts are provided by residues 136–140 (TVSGG), aspartate 169, glycine 182, aspartate 186, and asparagine 284. Aspartate 312 lines the Fe cation pocket.

It belongs to the KAE1 / TsaD family. The cofactor is Fe(2+).

It is found in the cytoplasm. The catalysed reaction is L-threonylcarbamoyladenylate + adenosine(37) in tRNA = N(6)-L-threonylcarbamoyladenosine(37) in tRNA + AMP + H(+). Required for the formation of a threonylcarbamoyl group on adenosine at position 37 (t(6)A37) in tRNAs that read codons beginning with adenine. Is involved in the transfer of the threonylcarbamoyl moiety of threonylcarbamoyl-AMP (TC-AMP) to the N6 group of A37, together with TsaE and TsaB. TsaD likely plays a direct catalytic role in this reaction. The polypeptide is tRNA N6-adenosine threonylcarbamoyltransferase (Chlorobium luteolum (strain DSM 273 / BCRC 81028 / 2530) (Pelodictyon luteolum)).